A 1372-amino-acid chain; its full sequence is Capping protein, Arp2/3 and myosin-I linker protein 3 (1372 aa).

Positions 126–151 (RGNADTPEGPRDTSPNSETSTSTTHS) are disordered. Residues 138–151 (TSPNSETSTSTTHS) show a composition bias toward low complexity. LRR repeat units lie at residues 244 to 264 (SLEE…QKLA), 274 to 295 (VLHA…SLSQ), 303 to 323 (GLTK…QALG), 335 to 357 (SLRY…NALY), 365 to 385 (ALVH…LGAL), 392 to 413 (HLTY…EAPP), 424 to 444 (TLSH…RALL), 455 to 475 (DLHL…ALQE), 482 to 501 (CVGS…LTLV), and 509 to 530 (SLKH…EEIL). Disordered stretches follow at residues 865 to 900 (TLSD…ELGT), 970 to 1003 (KLRH…RQEN), and 1024 to 1372 (ESSS…PGTD). Residues 982–995 (PRTTPPGPGRPSMP) are compositionally biased toward pro residues. The interval 1040–1073 (SEAPLPPLQKKRRRGLFHFRRPRSFKGDRGPGSP) is necessary for localization at the cell membrane. A compositionally biased stretch (basic residues) spans 1048 to 1063 (QKKRRRGLFHFRRPRS). A compositionally biased stretch (pro residues) spans 1079 to 1098 (LPPPPPPPPTQESPPSPDPP). The segment covering 1099–1109 (SLGNNSSPCWS) has biased composition (low complexity). Composition is skewed to basic and acidic residues over residues 1163–1177 (ERAK…REGP) and 1219–1229 (RRAEATWHIAE). Positions 1233 to 1244 (PNHSCQSPSPAS) are enriched in polar residues. Over residues 1348–1361 (QSCDKLEPDRRRPP) the composition is skewed to basic and acidic residues.

It belongs to the CARMIL family. As to expression, widely expressed, with much higher levels in fetal tissues than in adult ones. Up-regulated in certain cancer tissues.

It is found in the cytoplasm. The protein localises to the cell membrane. This chain is Capping protein, Arp2/3 and myosin-I linker protein 3, found in Homo sapiens (Human).